We begin with the raw amino-acid sequence, 416 residues long: Tyrosine--tRNA ligase (416 aa).

Tyr-39 lines the L-tyrosine pocket. Residues Cys-44–His-53 carry the 'HIGH' region motif. The L-tyrosine site is built by Tyr-176 and Gln-180. Residues Lys-236–Thr-240 carry the 'KMSKS' region motif. Residue Lys-239 participates in ATP binding. Positions Ile-349–Val-414 constitute an S4 RNA-binding domain.

Belongs to the class-I aminoacyl-tRNA synthetase family. TyrS type 1 subfamily. Homodimer.

The protein localises to the cytoplasm. It catalyses the reaction tRNA(Tyr) + L-tyrosine + ATP = L-tyrosyl-tRNA(Tyr) + AMP + diphosphate + H(+). Catalyzes the attachment of tyrosine to tRNA(Tyr) in a two-step reaction: tyrosine is first activated by ATP to form Tyr-AMP and then transferred to the acceptor end of tRNA(Tyr). The chain is Tyrosine--tRNA ligase from Wolbachia pipientis wMel.